The chain runs to 374 residues: DNA replication and repair protein RecF (374 aa).

Position 34 to 41 (34 to 41 (GNNGAGKT)) interacts with ATP.

Belongs to the RecF family.

The protein localises to the cytoplasm. The RecF protein is involved in DNA metabolism; it is required for DNA replication and normal SOS inducibility. RecF binds preferentially to single-stranded, linear DNA. It also seems to bind ATP. This Rhizobium etli (strain CIAT 652) protein is DNA replication and repair protein RecF.